The primary structure comprises 436 residues: MSTGFFGDIAKIKYEGPDSTNPLAFRHYNPDEIVGGKRMEDHLRFAVAYWHTFTWPGGDPFGGQTFQRPWFEDTMQAAKLKADVAFEFFSLLGSPFYCFHDADVRPEGKNFAENTKNLNEIVDYFAQKQADTGVKLLWGTANLFSNRRFMSGAATNPDPDVFAFSAATVKTCMDATKTLGGANYVLWGGREGYETLLNTDLSRELDQLGRFLNLVVEYKYKIGFEGTILIEPKPQEPTKHQYDYDVATVYAFLQKNGLEKEVKVNIEQGHAILAGHSFEHELAMANAFGIFGSIDMNRNDYQSGWDTDQFPNNVPEMALAYYHVLAGGGFKNGGTNFDSKLRRQSLDPQDLLIGHIGGMDCCARGLKAAAKMIEDGALSKPLSERYAKWDSPEAQKMLRGELKLEEIAALVERDDINPEPKPGRQEYLENVVNRYV.

Catalysis depends on residues His100 and Asp103. The Mg(2+) site is built by Glu231, Glu267, His270, Asp295, Asp306, Asp308, and Asp338.

Belongs to the xylose isomerase family. As to quaternary structure, homotetramer. Mg(2+) serves as cofactor.

It is found in the cytoplasm. The catalysed reaction is alpha-D-xylose = alpha-D-xylulofuranose. The protein is Xylose isomerase of Agrobacterium fabrum (strain C58 / ATCC 33970) (Agrobacterium tumefaciens (strain C58)).